A 321-amino-acid polypeptide reads, in one-letter code: MAKQSGADRELVIGSRGSILALWQAEYIKSCLKAQCGLQSRIQIIKTRGDKILDVPLAKIGGKGLFTKELEEMLLSKDIDLAVHSLKDVPVEFVPELDLAAITQRESANDCFLSVNYPNLNALPQGAKVGTTSLRRSMQIKKYRSDLDTLSLRGNVQTRLEKLHNGAFDAIILAQAGVNRLKINTQDVRYIVPLDFMIPAMGQGALGIEMRKDSIFFDRIAVLNDKQSALCVSAERAFVRTLEGGCQVPIGVYAQFSNNKLTLQAIVGLPDGSEVLQDSVEDSINIDDINASENLGIAFAQKFIDKGAKELLERAAKIAFA.

Position 246 is an S-(dipyrrolylmethanemethyl)cysteine (Cys246).

The protein belongs to the HMBS family. In terms of assembly, monomer. Requires dipyrromethane as cofactor.

It carries out the reaction 4 porphobilinogen + H2O = hydroxymethylbilane + 4 NH4(+). It participates in porphyrin-containing compound metabolism; protoporphyrin-IX biosynthesis; coproporphyrinogen-III from 5-aminolevulinate: step 2/4. Functionally, tetrapolymerization of the monopyrrole PBG into the hydroxymethylbilane pre-uroporphyrinogen in several discrete steps. The sequence is that of Porphobilinogen deaminase from Helicobacter hepaticus (strain ATCC 51449 / 3B1).